We begin with the raw amino-acid sequence, 121 residues long: 18 kDa learning-associated protein of slug (121 aa).

Disordered stretches follow at residues 44-67 (TMKTTEPIQENKTSEGTSTDGSME) and 95-121 (AVKKQKQKLNKLKIKKKSGKVSKAIKW). Residues 45–64 (MKTTEPIQENKTSEGTSTDG) are compositionally biased toward polar residues.

Belongs to the learning-associated protein family. In terms of tissue distribution, expressed predominantly in cerebral ganglia (at protein level). The mRNA is highly expressed in cerebral ganglia, and is detected at lower levels in visceral-pedal ganglia, head, and body, but is not detected in the tail.

It is found in the cytoplasm. Its subcellular location is the secreted. Its function is as follows. May be involved in modulating long-term memory formation and retention, at least with respect to odor-taste associative learning. The chain is 18 kDa learning-associated protein of slug from Lehmannia marginata (Tree slug).